Here is a 205-residue protein sequence, read N- to C-terminus: Small ribosomal subunit protein uS4 (205 aa).

A disordered region spans residues 20-47 (WGRSKSPLNRGKENPPGQHGQRRKKPSD). One can recognise an S4 RNA-binding domain in the interval 94–154 (CRLDAVVYRL…TKSKDMALIL (61 aa)).

Belongs to the universal ribosomal protein uS4 family. Part of the 30S ribosomal subunit. Contacts protein S5. The interaction surface between S4 and S5 is involved in control of translational fidelity.

Its function is as follows. One of the primary rRNA binding proteins, it binds directly to 16S rRNA where it nucleates assembly of the body of the 30S subunit. In terms of biological role, with S5 and S12 plays an important role in translational accuracy. The polypeptide is Small ribosomal subunit protein uS4 (Paramagnetospirillum magneticum (strain ATCC 700264 / AMB-1) (Magnetospirillum magneticum)).